A 261-amino-acid polypeptide reads, in one-letter code: Hemin import ATP-binding protein HmuV (261 aa).

The ABC transporter domain occupies Leu-7–Lys-243. ATP is bound at residue Gly-39–Ser-46.

Belongs to the ABC transporter superfamily. Heme (hemin) importer (TC 3.A.1.14.5) family. As to quaternary structure, the complex is composed of two ATP-binding proteins (HmuV), two transmembrane proteins (HmuU) and a solute-binding protein (HmuT).

It localises to the cell inner membrane. Part of the ABC transporter complex HmuTUV involved in hemin import. Responsible for energy coupling to the transport system. This chain is Hemin import ATP-binding protein HmuV, found in Vibrio vulnificus (strain CMCP6).